A 344-amino-acid chain; its full sequence is L-rhamnose-proton symporter (344 aa).

Helical transmembrane passes span 4-24 (AITM…CFYA), 38-58 (WSIG…ALLL), 68-88 (FNLS…IGNI), 101-121 (MGIG…TPII), 137-157 (TLLG…AGQL), 175-195 (LLLA…MNAA), 214-234 (LPSY…FCFV), 259-279 (ILLS…YAWG), 290-310 (ISWM…GLVL), and 323-343 (VLSL…MGMA).

It belongs to the L-rhamnose transporter (TC 2.A.7.6) family.

It is found in the cell inner membrane. The catalysed reaction is L-rhamnopyranose(in) + H(+)(in) = L-rhamnopyranose(out) + H(+)(out). Its function is as follows. Uptake of L-rhamnose across the cytoplasmic membrane with the concomitant transport of protons into the cell (symport system). This is L-rhamnose-proton symporter from Citrobacter koseri (strain ATCC BAA-895 / CDC 4225-83 / SGSC4696).